Here is a 333-residue protein sequence, read N- to C-terminus: Heat shock transcription factor, X-linked member 3 (333 aa).

The interval 1 to 66 is disordered; that stretch reads MASQNTEQEY…QDNSPPEDRN (66 aa). Low complexity predominate over residues 29–39; sequence GSSPDPNPDSS. Residues 49–60 are compositionally biased toward polar residues; the sequence is AMSQDPGSQDNS. A DNA-binding region spans residues 79–182; the sequence is FRLSFPRKLW…PRLLENIQRK (104 aa). Residues 227–275 are disordered; the sequence is QGAPSVQGPSGTQSFRRSGMWSKKSATRHPLGNGPPQEPNGPSWEGTSG. Polar residues predominate over residues 228-242; it reads GAPSVQGPSGTQSFR.

It belongs to the HSF family.

It is found in the nucleus. This is Heat shock transcription factor, X-linked member 3 from Homo sapiens (Human).